Here is a 77-residue protein sequence, read N- to C-terminus: Phytosulfokines 5 (77 aa).

The first 24 residues, 1-24, serve as a signal peptide directing secretion; sequence MVKFTTFLCIIALLLCSTLTHASA. Residues 25-68 constitute a propeptide that is removed on maturation; the sequence is RLNPTSVYPEENSFKKLEQGEVICEGVGEEECFLIRRTLVAHTD. Sulfotyrosine is present on residues Tyr69 and Tyr71. Positions 74–77 are excised as a propeptide; that stretch reads NHNP.

Belongs to the phytosulfokine family. In terms of processing, sulfation is important for activity and for the binding to a putative membrane receptor. PSK-beta is an enzymatic derivative of PSK-alpha. As to expression, expressed in stems, roots, mature leaves and flowers. Most abundant in vascular bundles.

It is found in the secreted. Its function is as follows. Promotes plant cell differentiation, organogenesis and somatic embryogenesis as well as cell proliferation. May be involved in the low quiescent center cell proliferation. This chain is Phytosulfokines 5 (PSK5), found in Arabidopsis thaliana (Mouse-ear cress).